The chain runs to 122 residues: UPF0102 protein Atu0303 (122 aa).

Belongs to the UPF0102 family.

The chain is UPF0102 protein Atu0303 from Agrobacterium fabrum (strain C58 / ATCC 33970) (Agrobacterium tumefaciens (strain C58)).